Reading from the N-terminus, the 274-residue chain is Protein RecA (274 aa).

G43–T50 lines the ATP pocket.

Belongs to the RecA family.

The protein resides in the cytoplasm. Functionally, can catalyze the hydrolysis of ATP in the presence of single-stranded DNA, the ATP-dependent uptake of single-stranded DNA by duplex DNA, and the ATP-dependent hybridization of homologous single-stranded DNAs. It interacts with LexA causing its activation and leading to its autocatalytic cleavage. This chain is Protein RecA, found in Neisseria polysaccharea.